The chain runs to 48 residues: Gas vesicle protein A (48 aa).

This sequence belongs to the gas vesicle GvpA family. As to quaternary structure, the gas vesicle shell is 2 nm thick and consists of a single layer of this protein. It forms helical ribs nearly perpendicular to the long axis of the vesicle.

Its subcellular location is the gas vesicle shell. Gas vesicles are hollow, gas filled proteinaceous nanostructures found in some microorganisms. During planktonic growth they allow positioning of the organism at a favorable depth for light or nutrient acquisition. GvpA forms the protein shell. The chain is Gas vesicle protein A from Spirulina sp. (strain CCAP 1475/10).